Here is a 128-residue protein sequence, read N- to C-terminus: uncharacterized protein (128 aa).

The N-terminal stretch at 1–24 (MKMTKLTTLLLTATLGLASGAALA) is a signal peptide. Composition is skewed to low complexity over residues 24 to 44 (AAESNAQSSNGQANSAANAGQ) and 52 to 70 (NVAPNDVNNNDINTNGNTN). The tract at residues 24 to 128 (AAESNAQSSN…VNTKTDGTTQ (105 aa)) is disordered. The segment covering 71 to 82 (STMQHPDGSTMN) has biased composition (polar residues). Residues 85 to 110 (GMTKDEEHKNTMCKDGRCPDINKKVE) are compositionally biased toward basic and acidic residues. Over residues 113–128 (NGVNNDVNTKTDGTTQ) the composition is skewed to polar residues.

This is an uncharacterized protein from Salmonella typhi.